Reading from the N-terminus, the 714-residue chain is Developmentally-regulated protein kinase 1 (714 aa).

2 disordered regions span residues 88 to 122 and 174 to 266; these read NNNISNNNNNNNNNNNNNNNNNNNNNNINNNNNFN and CNMI…IINN. 3 stretches are compositionally biased toward low complexity: residues 174–200, 209–227, and 240–266; these read CNMINNDNNNNNNNNNNNNNNNNNNNN, PSSNSTPSHSSPSSPTTSS, and NFNQQLQNNNNSNNNSNNNNNNNIINN. Positions 334-589 constitute a Protein kinase domain; that stretch reads FNFYGSLGSG…SCSIRNHKWF (256 aa). Residues 340–348 and K363 each bind ATP; that span reads LGSGSFGTA. Residue D457 is the Proton acceptor of the active site. Residue T488 is modified to Phosphothreonine.

This sequence belongs to the protein kinase superfamily. AGC Ser/Thr protein kinase family.

The enzyme catalyses L-seryl-[protein] + ATP = O-phospho-L-seryl-[protein] + ADP + H(+). The catalysed reaction is L-threonyl-[protein] + ATP = O-phospho-L-threonyl-[protein] + ADP + H(+). The chain is Developmentally-regulated protein kinase 1 (pkaD) from Dictyostelium discoideum (Social amoeba).